We begin with the raw amino-acid sequence, 83 residues long: Omega-agatoxin-Aa4b (83 aa).

The signal sequence occupies residues 1-20; that stretch reads MKLCMTLLITAIAVVTFVVA. A propeptide spanning residues 21–35 is cleaved from the precursor; the sequence is TQEESAEFNEVEESR. Intrachain disulfides connect Cys-39-Cys-55, Cys-47-Cys-60, Cys-54-Cys-71, and Cys-62-Cys-69. Ser-81 carries the post-translational modification D-serine (Ser).

The protein belongs to the neurotoxin 02 (plectoxin) family. 03 (omega-agtx) subfamily. In terms of processing, the toxin with D-Ser (named omega-aga IVC) is 80-90 fold more potent than that with L-Ser (omega-aga IVB) against Cav2.1/CACNA1A (P-type) channels in rat cerebellar Purkinje neurons and is more resistant to proteases. The epimerization is done by the venom peptide isomerase heterodimer. In terms of tissue distribution, expressed by the venom gland.

It is found in the secreted. Antagonist of voltage-gated Cav2.1/CACNA1A (P-type) calcium channels. Paralyzes insect by blocking neuromuscular transmission. The sequence is that of Omega-agatoxin-Aa4b from Agelenopsis aperta (North American funnel-web spider).